A 460-amino-acid polypeptide reads, in one-letter code: MTKPSDPTRDSHVAVLAFPFGTHAAPLLTVTRRLASASPSTVFSFFNTAQSNSSLFSSGDEADRPANIRVYDIADGVPEGYVFSGRPQEAIELFLQAAPENFRREIAKAETEVGTEVKCLMTDAFFWFAADMATEINASWIAFWTAGANSLSAHLYTDLIRETIGVKEVGERMEETIGVISGMEKIRVKDTPEGVVFGNLDSVFSKMLHQMGLALPRATAVFINSFEDLDPTLTNNLRSRFKRYLNIGPLGLLSSTLQQLVQDPHGCLAWMEKRSSGSVAYISFGTVMTPPPGELAAIAEGLESSKVPFVWSLKEKSLVQLPKGFLDRTREQGIVVPWAPQVELLKHEATGVFVTHCGWNSVLESVSGGVPMICRPFFGDQRLNGRAVEVVWEIGMTIINGVFTKDGFEKCLDKVLVQDDGKKMKCNAKKLKELAYEAVSSKGRSSENFRGLLDAVVNII.

His23 functions as the Proton acceptor in the catalytic mechanism. The an anthocyanidin site is built by His23 and Gln88. The active-site Charge relay is the Asp123. UDP-alpha-D-glucose is bound at residue Thr145. His154 provides a ligand contact to an anthocyanidin. The UDP-alpha-D-glucose site is built by Ala339, Gln341, His356, Trp359, Asn360, Ser361, and Glu364. Gly379 contributes to the an anthocyanidin binding site. UDP-alpha-D-glucose contacts are provided by Asp380 and Gln381.

It belongs to the UDP-glycosyltransferase family.

It catalyses the reaction a flavonol + UDP-alpha-D-glucose = a flavonol 3-O-beta-D-glucoside + UDP + H(+). It carries out the reaction quercetin + UDP-alpha-D-glucose = quercetin 3-O-beta-D-glucoside + UDP + H(+). The protein operates within flavonoid metabolism. Functionally, flavonol 3-O-glucosyltransferase that catalyzes the transfer of glucose from UDP-glucose to the 3-OH position of quercetin and kaempferol. Possesses high quercetin 3-O-glucosyltransferase activity in vitro. Catalyzes the glycosylation of anthocyanins from UDP-glucose. Also active in vitro on benzoates and benzoate derivatives. In Arabidopsis thaliana (Mouse-ear cress), this protein is Flavonol 3-O-glucosyltransferase.